The chain runs to 335 residues: Pyridoxal 5'-phosphate synthase subunit PdxS (335 aa).

A D-ribose 5-phosphate-binding site is contributed by aspartate 59. The active-site Schiff-base intermediate with D-ribose 5-phosphate is lysine 116. Position 188 (glycine 188) interacts with D-ribose 5-phosphate. Residue lysine 200 coordinates D-glyceraldehyde 3-phosphate. D-ribose 5-phosphate-binding positions include glycine 253 and 274 to 275 (GS).

This sequence belongs to the PdxS/SNZ family. In the presence of PdxT, forms a dodecamer of heterodimers.

The catalysed reaction is aldehydo-D-ribose 5-phosphate + D-glyceraldehyde 3-phosphate + L-glutamine = pyridoxal 5'-phosphate + L-glutamate + phosphate + 3 H2O + H(+). Its pathway is cofactor biosynthesis; pyridoxal 5'-phosphate biosynthesis. Catalyzes the formation of pyridoxal 5'-phosphate from ribose 5-phosphate (RBP), glyceraldehyde 3-phosphate (G3P) and ammonia. The ammonia is provided by the PdxT subunit. Can also use ribulose 5-phosphate and dihydroxyacetone phosphate as substrates, resulting from enzyme-catalyzed isomerization of RBP and G3P, respectively. This is Pyridoxal 5'-phosphate synthase subunit PdxS from Desulfurococcus amylolyticus (strain DSM 18924 / JCM 16383 / VKM B-2413 / 1221n) (Desulfurococcus kamchatkensis).